We begin with the raw amino-acid sequence, 273 residues long: Outer surface protein A (273 aa).

An N-terminal signal peptide occupies residues 1–16 (MKKYLLGIGLILALIA). Cys17 is lipidated: N-palmitoyl cysteine. Residue Cys17 is the site of S-diacylglycerol cysteine attachment.

The protein belongs to the OspA lipoprotein family.

The protein resides in the cell outer membrane. It is found in the cell surface. Its function is as follows. Induces host (human and mouse) cytokine release by monocyte cell lines via TLR2 and CD14; nonlipidated protein does not stimulate host cells. In Borreliella burgdorferi (strain ATCC 35210 / DSM 4680 / CIP 102532 / B31) (Borrelia burgdorferi), this protein is Outer surface protein A.